A 375-amino-acid polypeptide reads, in one-letter code: Succinyl-diaminopimelate desuccinylase (375 aa).

Histidine 66 is a Zn(2+) binding site. Aspartate 68 is an active-site residue. Zn(2+) is bound at residue aspartate 99. Glutamate 133 serves as the catalytic Proton acceptor. Zn(2+)-binding residues include glutamate 134, glutamate 162, and histidine 348.

Belongs to the peptidase M20A family. DapE subfamily. As to quaternary structure, homodimer. Zn(2+) is required as a cofactor. Requires Co(2+) as cofactor.

It carries out the reaction N-succinyl-(2S,6S)-2,6-diaminopimelate + H2O = (2S,6S)-2,6-diaminopimelate + succinate. The protein operates within amino-acid biosynthesis; L-lysine biosynthesis via DAP pathway; LL-2,6-diaminopimelate from (S)-tetrahydrodipicolinate (succinylase route): step 3/3. In terms of biological role, catalyzes the hydrolysis of N-succinyl-L,L-diaminopimelic acid (SDAP), forming succinate and LL-2,6-diaminopimelate (DAP), an intermediate involved in the bacterial biosynthesis of lysine and meso-diaminopimelic acid, an essential component of bacterial cell walls. The protein is Succinyl-diaminopimelate desuccinylase of Photorhabdus laumondii subsp. laumondii (strain DSM 15139 / CIP 105565 / TT01) (Photorhabdus luminescens subsp. laumondii).